The primary structure comprises 424 residues: Histidine--tRNA ligase (424 aa).

Belongs to the class-II aminoacyl-tRNA synthetase family. Homodimer.

Its subcellular location is the cytoplasm. It carries out the reaction tRNA(His) + L-histidine + ATP = L-histidyl-tRNA(His) + AMP + diphosphate + H(+). The protein is Histidine--tRNA ligase of Klebsiella pneumoniae (strain 342).